The following is a 211-amino-acid chain: Peroxiredoxin (211 aa).

Residues 2–156 (PLLGDDFPEL…ILRAVKVLQI (155 aa)) enclose the Thioredoxin domain. The Cysteine sulfenic acid (-SOH) intermediate role is filled by C44. Residue R119 participates in substrate binding. Cysteines 199 and 205 form a disulfide.

This sequence belongs to the peroxiredoxin family. Prx6 subfamily. Homodecamer. Pentamer of dimers that assemble into a ring structure.

It is found in the cytoplasm. The catalysed reaction is a hydroperoxide + [thioredoxin]-dithiol = an alcohol + [thioredoxin]-disulfide + H2O. In terms of biological role, thiol-specific peroxidase that catalyzes the reduction of hydrogen peroxide and organic hydroperoxides to water and alcohols, respectively. Plays a role in cell protection against oxidative stress by detoxifying peroxides. This chain is Peroxiredoxin, found in Chlorobaculum tepidum (strain ATCC 49652 / DSM 12025 / NBRC 103806 / TLS) (Chlorobium tepidum).